Here is a 342-residue protein sequence, read N- to C-terminus: MKASPKKLLATLRGARHERTPLWLMRQAGRYLPEYRALRESKGGFLELCYDPEAAAEVTLQPIRRFGFDGAILFSDILVIPHALGQHLWFEAGEGPRLAPPLVDGALASLEAAPQRLDPVYATVARVAASLPPETTFLGFAGSPWTVATYMVAGRGSKDQAAARRMAFADPAAFGAIIDAIADLTVTYLSGQIEQGVDAVQLFDSWAGSLSPAQFEQWVIAPNAGIVRRLKALHPDTPVIGFPKGAGGKLRAYAEETGVDAIGLDETVDPTWADAALPSQLPVQGNLDPLALVAGGAALDAAIDRILAAFPSRPHIFNLGHGIVPDTPVAHVEHLIKRVRGG.

Substrate is bound by residues 26–30 (RQAGR), aspartate 76, tyrosine 150, serine 205, and histidine 321.

Belongs to the uroporphyrinogen decarboxylase family. In terms of assembly, homodimer.

The protein resides in the cytoplasm. The catalysed reaction is uroporphyrinogen III + 4 H(+) = coproporphyrinogen III + 4 CO2. The protein operates within porphyrin-containing compound metabolism; protoporphyrin-IX biosynthesis; coproporphyrinogen-III from 5-aminolevulinate: step 4/4. Functionally, catalyzes the decarboxylation of four acetate groups of uroporphyrinogen-III to yield coproporphyrinogen-III. The protein is Uroporphyrinogen decarboxylase of Sphingopyxis alaskensis (strain DSM 13593 / LMG 18877 / RB2256) (Sphingomonas alaskensis).